The sequence spans 432 residues: Glutamate-1-semialdehyde 2,1-aminomutase (432 aa).

Position 267 is an N6-(pyridoxal phosphate)lysine (K267).

Belongs to the class-III pyridoxal-phosphate-dependent aminotransferase family. HemL subfamily. As to quaternary structure, homodimer. It depends on pyridoxal 5'-phosphate as a cofactor.

It is found in the cytoplasm. The enzyme catalyses (S)-4-amino-5-oxopentanoate = 5-aminolevulinate. It functions in the pathway porphyrin-containing compound metabolism; protoporphyrin-IX biosynthesis; 5-aminolevulinate from L-glutamyl-tRNA(Glu): step 2/2. The polypeptide is Glutamate-1-semialdehyde 2,1-aminomutase (Syntrophus aciditrophicus (strain SB)).